Consider the following 188-residue polypeptide: MMTIQQQLETVLGDLQKAKPLSSKHLLVIGVSTSEVAGKQIGTNSSKDVAAALYAALFSYQQKTGVALAFQCCEHLNRALVMERDEAEARGYEEVAVIPVRKAGGAMATYAFTQFRDPVIVEQIRADAGIDIGDTFIGMHLKRVAVPVRSSISAIGDAHVTMAYSRPKLIGGVRANYERTEEHESFRC.

Belongs to the UPF0340 family.

The sequence is that of UPF0340 protein BH3766 from Halalkalibacterium halodurans (strain ATCC BAA-125 / DSM 18197 / FERM 7344 / JCM 9153 / C-125) (Bacillus halodurans).